A 313-amino-acid polypeptide reads, in one-letter code: HPr kinase/phosphorylase (313 aa).

Residues histidine 140 and lysine 161 contribute to the active site. 155–162 (GNSGAGKS) lines the ATP pocket. Serine 162 is a Mg(2+) binding site. Aspartate 179 functions as the Proton acceptor; for phosphorylation activity. Proton donor; for dephosphorylation activity in the catalytic mechanism. The interval 203-212 (IEVRGLGILN) is important for the catalytic mechanism of both phosphorylation and dephosphorylation. Residue glutamate 204 participates in Mg(2+) binding. Arginine 246 is a catalytic residue. The segment at 267 to 272 (PVAAGR) is important for the catalytic mechanism of dephosphorylation.

This sequence belongs to the HPrK/P family. In terms of assembly, homohexamer. Mg(2+) is required as a cofactor.

The catalysed reaction is [HPr protein]-L-serine + ATP = [HPr protein]-O-phospho-L-serine + ADP + H(+). It carries out the reaction [HPr protein]-O-phospho-L-serine + phosphate + H(+) = [HPr protein]-L-serine + diphosphate. Its function is as follows. Catalyzes the ATP- as well as the pyrophosphate-dependent phosphorylation of a specific serine residue in HPr, a phosphocarrier protein of the phosphoenolpyruvate-dependent sugar phosphotransferase system (PTS). HprK/P also catalyzes the pyrophosphate-producing, inorganic phosphate-dependent dephosphorylation (phosphorolysis) of seryl-phosphorylated HPr (P-Ser-HPr). This chain is HPr kinase/phosphorylase, found in Azoarcus sp. (strain BH72).